Reading from the N-terminus, the 182-residue chain is UPF0200 protein Mthe_1012 (182 aa).

Residue 8–15 (GMPGSGKS) participates in ATP binding.

It belongs to the UPF0200 family.

The chain is UPF0200 protein Mthe_1012 from Methanothrix thermoacetophila (strain DSM 6194 / JCM 14653 / NBRC 101360 / PT) (Methanosaeta thermophila).